A 451-amino-acid polypeptide reads, in one-letter code: Tubulin alpha-3 chain (451 aa).

A GTP-binding site is contributed by glutamine 11. Lysine 40 bears the N6-acetyllysine mark. Residues glutamate 71, glycine 144, threonine 145, threonine 179, asparagine 206, and asparagine 228 each contribute to the GTP site. Residue glutamate 71 participates in Mg(2+) binding. Residue glutamate 254 is part of the active site.

Belongs to the tubulin family. In terms of assembly, dimer of alpha and beta chains. A typical microtubule is a hollow water-filled tube with an outer diameter of 25 nm and an inner diameter of 15 nM. Alpha-beta heterodimers associate head-to-tail to form protofilaments running lengthwise along the microtubule wall with the beta-tubulin subunit facing the microtubule plus end conferring a structural polarity. Microtubules usually have 13 protofilaments but different protofilament numbers can be found in some organisms and specialized cells. Mg(2+) is required as a cofactor. In terms of processing, undergoes a tyrosination/detyrosination cycle, the cyclic removal and re-addition of a C-terminal tyrosine residue by the enzymes tubulin tyrosine carboxypeptidase (TTCP) and tubulin tyrosine ligase (TTL), respectively. Acetylation of alpha chains at Lys-40 stabilizes microtubules and affects affinity and processivity of microtubule motors. This modification has a role in multiple cellular functions, ranging from cell motility, cell cycle progression or cell differentiation to intracellular trafficking and signaling.

The protein resides in the cytoplasm. It localises to the cytoskeleton. The catalysed reaction is GTP + H2O = GDP + phosphate + H(+). In terms of biological role, tubulin is the major constituent of microtubules, a cylinder consisting of laterally associated linear protofilaments composed of alpha- and beta-tubulin heterodimers. Microtubules grow by the addition of GTP-tubulin dimers to the microtubule end, where a stabilizing cap forms. Below the cap, tubulin dimers are in GDP-bound state, owing to GTPase activity of alpha-tubulin. This is Tubulin alpha-3 chain (TUBA3) from Hordeum vulgare (Barley).